Here is a 906-residue protein sequence, read N- to C-terminus: MVSFGGFARKIFGSSNDRRVKTLRQRANQITAIEKNYENLTDEQLQAKTAEFRAALAGGKTLDSLLPDAFATAREAAKRVLGMRPFDVQLIGGMVLHERGIAEMRTGEGKTLMATLPVYLNALEGKGVHVVTVNDYLATRDAETMGKLYNFLGLTVGVIKHGLDDDERRAAYACDITYGTNNELGFDYLRDNMKYERAQMVQRPHNYAIVDEVDSILIDEARTPLIISGPLEDRSDFYNLIDTFIPALEPEDFEIDEKQKTAIFTEVGTEKVEQLLEAAGHLKGESLYDIENVAVVHHLNNALRAHKLFQRDKDYIVRNDEIVIIDEFTGRMMPGRRYSEGLHQALEAKEHVTIQPENQTLASITFQNYFRMYNKLSGMTGTAATEAEEFGNIYGLEVLEIPTNLPVQRIDEDDEVYRSVEEKYRAIVRDIRASHEKGQPILVGTTSIEKSEQLAERLRKEGIKEFQVLNARYHEQEAYIIAQAGVPGTVTIATNMAGRGTDIQLGGNLEMRVRQELSDIPEGPERDAKIAEIKADIAQLKEKALAAGGLYVLATERHESRRIDNQLRGRSGRQGDPGRSKFFLSLQDDLMRIFGSDRMDSMLQKLGLKEDEAIVHPWINKALEKAQKKVEARNFEIRKNLLKYDDVMNDQRKVIFEQRLEMMDEEDLTETVGEMRHEVIEDMVALRIPKDAYAEKWDIAGLKEDIISKLNLDLPVEDWAKEEGIAEEEFENRIKEAADKAAAEKAERFGPQIMTYVEKSVIMQSLDNLWREHLVNLDHLRSVVGFRGYAQRDPLNEYKTEAFELFQSMLANLREVVISQLMRVEIVREAPPEPELPPMTGRHIDSTTGENDFDEASWSDHQHDERNVPAAERDPADPRTWGKVSRNEACPCGSGKKYKHCHGAFE.

ATP contacts are provided by residues Gln89, 107–111 (GEGKT), and Asp502. The disordered stretch occupies residues 829–898 (EAPPEPELPP…ACPCGSGKKY (70 aa)). The span at 858–877 (WSDHQHDERNVPAAERDPAD) shows a compositional bias: basic and acidic residues. Cys890, Cys892, Cys901, and His902 together coordinate Zn(2+).

Belongs to the SecA family. In terms of assembly, monomer and homodimer. Part of the essential Sec protein translocation apparatus which comprises SecA, SecYEG and auxiliary proteins SecDF-YajC and YidC. Zn(2+) serves as cofactor.

Its subcellular location is the cell inner membrane. It is found in the cytoplasm. It carries out the reaction ATP + H2O + cellular proteinSide 1 = ADP + phosphate + cellular proteinSide 2.. Its function is as follows. Part of the Sec protein translocase complex. Interacts with the SecYEG preprotein conducting channel. Has a central role in coupling the hydrolysis of ATP to the transfer of proteins into and across the cell membrane, serving both as a receptor for the preprotein-SecB complex and as an ATP-driven molecular motor driving the stepwise translocation of polypeptide chains across the membrane. This Brucella anthropi (strain ATCC 49188 / DSM 6882 / CCUG 24695 / JCM 21032 / LMG 3331 / NBRC 15819 / NCTC 12168 / Alc 37) (Ochrobactrum anthropi) protein is Protein translocase subunit SecA.